The primary structure comprises 1133 residues: Exportin-4 (1133 aa).

This sequence belongs to the exportin family. In terms of assembly, interacts with Ran and cargo proteins in a GTP-dependent manner.

It localises to the cytoplasm. Its subcellular location is the nucleus. Mediates the nuclear export of proteins (cargos). In the nucleus binds cooperatively to its cargo and to the GTPase Ran in its active GTP-bound form. Docking of this trimeric complex to the nuclear pore complex (NPC) is mediated through binding to nucleoporins. Upon transit of a nuclear export complex into the cytoplasm, disassembling of the complex and hydrolysis of Ran-GTP to Ran-GDP cause release of the cargo from the export receptor. Xpo4 then return to the nuclear compartment and mediate another round of transport. The directionality of nuclear export is thought to be conferred by an asymmetric distribution of the GTP- and GDP-bound forms of Ran between the cytoplasm and nucleus. The polypeptide is Exportin-4 (xpo4) (Dictyostelium discoideum (Social amoeba)).